A 36-amino-acid chain; its full sequence is MITFSFPSIFVPLVGLVFPAIAMASLSLHVQKNKII.

A helical transmembrane segment spans residues 1 to 21; the sequence is MITFSFPSIFVPLVGLVFPAI.

This sequence belongs to the PsaI family.

Its subcellular location is the plastid. It localises to the chloroplast thylakoid membrane. In terms of biological role, may help in the organization of the PsaL subunit. The chain is Photosystem I reaction center subunit VIII from Coffea arabica (Arabian coffee).